Reading from the N-terminus, the 602-residue chain is ATP-dependent lipid A-core flippase (602 aa).

5 consecutive transmembrane segments (helical) span residues 28–48, 84–104, 158–178, 180–200, and 268–288; these read VGIF…QPML, LLII…NYFL, IKVV…LLWM, WHLT…VSIA, and PMLQ…VLFL. An ABC transmembrane type-1 domain is found at 32-323; it reads LLSIVGFVIF…LSEVSSTIQK (292 aa). In terms of domain architecture, ABC transporter spans 355-591; that stretch reads LEVRNLSFTY…NGHYARLHAM (237 aa). 389 to 396 is an ATP binding site; it reads GRSGSGKS.

Belongs to the ABC transporter superfamily. Lipid exporter (TC 3.A.1.106) family. In terms of assembly, homodimer.

Its subcellular location is the cell inner membrane. It carries out the reaction ATP + H2O + lipid A-core oligosaccharideSide 1 = ADP + phosphate + lipid A-core oligosaccharideSide 2.. Functionally, involved in lipopolysaccharide (LPS) biosynthesis. Translocates lipid A-core from the inner to the outer leaflet of the inner membrane. Transmembrane domains (TMD) form a pore in the inner membrane and the ATP-binding domain (NBD) is responsible for energy generation. This is ATP-dependent lipid A-core flippase from Pseudomonas putida (strain ATCC 47054 / DSM 6125 / CFBP 8728 / NCIMB 11950 / KT2440).